The primary structure comprises 278 residues: Phosphatidylglycerol--prolipoprotein diacylglyceryl transferase (278 aa).

The next 4 helical transmembrane spans lie at 19-39 (WYGI…INEG), 49-69 (FIDF…IYYV), 83-103 (IIAI…GLIV), and 112-132 (MLPP…AQVI). Arginine 134 contributes to the a 1,2-diacyl-sn-glycero-3-phospho-(1'-sn-glycerol) binding site. 3 helical membrane passes run 174 to 194 (QPTY…ILSL), 204 to 224 (GEVF…VEGM), and 235 to 255 (IRVS…LWVY).

The protein belongs to the Lgt family.

The protein resides in the cell membrane. It catalyses the reaction L-cysteinyl-[prolipoprotein] + a 1,2-diacyl-sn-glycero-3-phospho-(1'-sn-glycerol) = an S-1,2-diacyl-sn-glyceryl-L-cysteinyl-[prolipoprotein] + sn-glycerol 1-phosphate + H(+). It participates in protein modification; lipoprotein biosynthesis (diacylglyceryl transfer). Its function is as follows. Catalyzes the transfer of the diacylglyceryl group from phosphatidylglycerol to the sulfhydryl group of the N-terminal cysteine of a prolipoprotein, the first step in the formation of mature lipoproteins. This Lactobacillus gasseri (strain ATCC 33323 / DSM 20243 / BCRC 14619 / CIP 102991 / JCM 1131 / KCTC 3163 / NCIMB 11718 / NCTC 13722 / AM63) protein is Phosphatidylglycerol--prolipoprotein diacylglyceryl transferase.